We begin with the raw amino-acid sequence, 93 residues long: Small ribosomal subunit protein uS19c (93 aa).

Belongs to the universal ribosomal protein uS19 family.

Its subcellular location is the plastid. It localises to the chloroplast. In terms of biological role, protein S19 forms a complex with S13 that binds strongly to the 16S ribosomal RNA. The protein is Small ribosomal subunit protein uS19c of Zygnema circumcarinatum (Green alga).